We begin with the raw amino-acid sequence, 91 residues long: Small ribosomal subunit protein uS19m (91 aa).

This sequence belongs to the universal ribosomal protein uS19 family. In terms of assembly, component of the mitochondrial small ribosomal subunit (mt-SSU). Mature N.crassa 74S mitochondrial ribosomes consist of a small (37S) and a large (54S) subunit. The 37S small subunit contains a 16S ribosomal RNA (16S mt-rRNA) and 32 different proteins. The 54S large subunit contains a 23S rRNA (23S mt-rRNA) and 42 different proteins.

The protein resides in the mitochondrion. In terms of biological role, component of the mitochondrial ribosome (mitoribosome), a dedicated translation machinery responsible for the synthesis of mitochondrial genome-encoded proteins, including at least some of the essential transmembrane subunits of the mitochondrial respiratory chain. The mitoribosomes are attached to the mitochondrial inner membrane and translation products are cotranslationally integrated into the membrane. The chain is Small ribosomal subunit protein uS19m (rsm19) from Neurospora crassa (strain ATCC 24698 / 74-OR23-1A / CBS 708.71 / DSM 1257 / FGSC 987).